Consider the following 232-residue polypeptide: Ubiquinone biosynthesis O-methyltransferase (232 aa).

S-adenosyl-L-methionine-binding residues include Arg-36, Gly-55, Asp-76, and Leu-120.

Belongs to the methyltransferase superfamily. UbiG/COQ3 family.

It carries out the reaction a 3-demethylubiquinol + S-adenosyl-L-methionine = a ubiquinol + S-adenosyl-L-homocysteine + H(+). The enzyme catalyses a 3-(all-trans-polyprenyl)benzene-1,2-diol + S-adenosyl-L-methionine = a 2-methoxy-6-(all-trans-polyprenyl)phenol + S-adenosyl-L-homocysteine + H(+). The protein operates within cofactor biosynthesis; ubiquinone biosynthesis. In terms of biological role, O-methyltransferase that catalyzes the 2 O-methylation steps in the ubiquinone biosynthetic pathway. The chain is Ubiquinone biosynthesis O-methyltransferase from Pseudomonas entomophila (strain L48).